Reading from the N-terminus, the 196-residue chain is WYSSMFAANIKQEPISHHHHHHHAHHSHHAHDSNSNASNSPHQSPLPSPNPPSHTNLQLEQYLKQQQQQQQQHQHQQQQQPMDTLCAAAMTPSFSNNDQNSRGWWSGLPNPMQTIMPANMRPSPTATAATTATDCCAPTTTAAAIALQANDKLQALTPPMDVTPPKSPAKSQQSCAEPEKEHDLMSNSSEDMKYMA.

Disordered regions lie at residues 16–56 (SHHH…SHTN), 63–82 (LKQQ…QQPM), and 156–196 (LTPP…KYMA). Basic residues predominate over residues 17-29 (HHHHHHHAHHSHH). Composition is skewed to low complexity over residues 33–43 (SNSNASNSPHQ) and 65–80 (QQQQ…QQQQ). A compositionally biased stretch (basic and acidic residues) spans 177 to 196 (EPEKEHDLMSNSSEDMKYMA).

This sequence belongs to the hunchback C2H2-type zinc-finger protein family.

The protein resides in the nucleus. Gap class segmentation protein that controls development of head structures. The chain is Protein hunchback (hb) from Drosophila adunca (Fruit fly).